The sequence spans 84 residues: Beta-defensin 119 (84 aa).

The signal sequence occupies residues 1-21 (MKLLYLFLAILLAIEEPVISG). Disulfide bonds link Cys28–Cys55, Cys35–Cys49, and Cys39–Cys56.

It belongs to the beta-defensin family.

The protein resides in the secreted. Functionally, has antibacterial activity. This chain is Beta-defensin 119 (DEFB119), found in Hylobates lar (Lar gibbon).